The following is a 320-amino-acid chain: Protein HEXIM1 (320 aa).

The segment at 1–124 is disordered; it reads MAEPLLSEFQ…RRRPSKKKRL (124 aa). Residues 9-19 are compositionally biased toward polar residues; that stretch reads FQHQPQTSNCT. The segment covering 24-47 has biased composition (basic and acidic residues); sequence VHEERNPDRPPGAEERVPEEDSRW. Ser-98 bears the Phosphoserine mark. Basic residues predominate over residues 109-124; the sequence is VGKKKHRRRPSKKKRL. The segment at 111–138 is basic region; mediates nuclear localization and interaction with 7SK snRNA and NR3C1; sequence KKKHRRRPSKKKRLWKPYYTLTWEEKKK. The interval 163–166 is interaction with P-TEFb; the sequence is PYNT. The segment at 171–211 is autoinhibitory acidic region; in absence of 7SK snRNA interacts with the basic region preventing interaction with P-TEFb and modulating subcellular localization; it reads MDDHDQEEPDLKTGLYPKRAAAKSDDTSDEDFMEEAGEEDG. The segment at 174–223 is disordered; that stretch reads HDQEEPDLKTGLYPKRAAAKSDDTSDEDFMEEAGEEDGGSDGMGGDGSEF. Ser-194 bears the Phosphoserine mark. Position 197 is a phosphothreonine (Thr-197). Over residues 197–212 the composition is skewed to acidic residues; the sequence is TSDEDFMEEAGEEDGG. Phosphoserine is present on residues Ser-198, Ser-213, and Ser-221. Residues 244 to 310 adopt a coiled-coil conformation; sequence SKQELIKEYL…LTENELHRQQ (67 aa). The mediates interaction with CCNT1 stretch occupies residues 247–275; that stretch reads ELIKEYLELEKCLSRMEDENNRLRLESQR. Residues 271–316 are required for inhibition of ESR1-dependent transcription; that stretch reads LESQRLDGDDARVRELELELDRLRAENLQLLTENELHRQQERAPLS.

This sequence belongs to the HEXIM family. Homooligomer and heterooligomer with HEXIM2; probably dimeric. Core component of the 7SK RNP complex, at least composed of 7SK RNA, LARP7, MEPCE, HEXIM1 (or HEXIM2) and P-TEFb (composed of CDK9 and CCNT1/cyclin-T1). Interacts with the N-CoR complex through NCOR1. Interacts with ESR1 and NR3C1. May interact with NF-kappa-B through RELA. Interacts with CCNT2; mediates formation of a tripartite complex with KPNA2. Part of the HDP-RNP complex composed of at least HEXIM1, PRKDC, XRCC5, XRCC6, paraspeckle proteins (SFPQ, NONO, PSPC1, RBM14, and MATR3) and NEAT1 non-coding RNA.

It localises to the nucleus. The protein localises to the cytoplasm. In terms of biological role, transcriptional regulator which functions as a general RNA polymerase II transcription inhibitor. Core component of the 7SK RNP complex: in cooperation with 7SK snRNA sequesters P-TEFb in a large inactive 7SK snRNP complex preventing RNA polymerase II phosphorylation and subsequent transcriptional elongation. May also regulate NF-kappa-B, ESR1, NR3C1 and CIITA-dependent transcriptional activity. Plays a role in the regulation of DNA virus-mediated innate immune response by assembling into the HDP-RNP complex, a complex that serves as a platform for IRF3 phosphorylation and subsequent innate immune response activation through the cGAS-STING pathway. The polypeptide is Protein HEXIM1 (HEXIM1) (Bos taurus (Bovine)).